The primary structure comprises 488 residues: Tetratricopeptide repeat protein 23 (488 aa).

TPR repeat units lie at residues 45-78, 137-170, 186-219, 228-261, and 398-431; these read LHLC…TRIC, LELF…SKEM, SRIK…TEIT, VQVL…TPQP, and AETY…ETFL.

Associated with the EvC complex composed of EFCAB7, IQCE, EVC2 and EVC.

It localises to the cell projection. It is found in the cilium. Its function is as follows. Participates positively in the ciliary Hedgehog (Hh) signaling. The chain is Tetratricopeptide repeat protein 23 (Ttc23) from Mus musculus (Mouse).